We begin with the raw amino-acid sequence, 120 residues long: UPF0231 protein NT01EI_0766 (120 aa).

This sequence belongs to the UPF0231 family.

The chain is UPF0231 protein NT01EI_0766 from Edwardsiella ictaluri (strain 93-146).